A 202-amino-acid chain; its full sequence is Small ribosomal subunit protein uS2 (202 aa).

It belongs to the universal ribosomal protein uS2 family. As to quaternary structure, part of the 30S ribosomal subunit.

This chain is Small ribosomal subunit protein uS2, found in Pyrococcus furiosus (strain ATCC 43587 / DSM 3638 / JCM 8422 / Vc1).